A 420-amino-acid polypeptide reads, in one-letter code: L-cysteine:1D-myo-inositol 2-amino-2-deoxy-alpha-D-glucopyranoside ligase (420 aa).

A Zn(2+)-binding site is contributed by C46. L-cysteinyl-5'-AMP-binding positions include 46–49, T61, and 84–86; these read CGIT and NVT. Positions 48-58 match the 'HIGH' region motif; it reads ITPYDSTHLGH. The 'ERGGDP' region signature appears at 194 to 199; the sequence is ERGGDP. W235 serves as a coordination point for L-cysteinyl-5'-AMP. C239 contacts Zn(2+). 257–259 provides a ligand contact to L-cysteinyl-5'-AMP; sequence GTD. Zn(2+) is bound at residue H264. Residue V291 coordinates L-cysteinyl-5'-AMP. Positions 297 to 301 match the 'KMSKS' region motif; that stretch reads KMSKS.

This sequence belongs to the class-I aminoacyl-tRNA synthetase family. MshC subfamily. As to quaternary structure, monomer. It depends on Zn(2+) as a cofactor.

The catalysed reaction is 1D-myo-inositol 2-amino-2-deoxy-alpha-D-glucopyranoside + L-cysteine + ATP = 1D-myo-inositol 2-(L-cysteinylamino)-2-deoxy-alpha-D-glucopyranoside + AMP + diphosphate + H(+). Functionally, catalyzes the ATP-dependent condensation of GlcN-Ins and L-cysteine to form L-Cys-GlcN-Ins. This chain is L-cysteine:1D-myo-inositol 2-amino-2-deoxy-alpha-D-glucopyranoside ligase, found in Beutenbergia cavernae (strain ATCC BAA-8 / DSM 12333 / CCUG 43141 / JCM 11478 / NBRC 16432 / NCIMB 13614 / HKI 0122).